Reading from the N-terminus, the 188-residue chain is Actin-related protein 2/3 complex subunit 3 (188 aa).

The protein belongs to the ARPC3 family. In terms of assembly, component of the Arp2/3 complex.

It localises to the cytoplasm. Its subcellular location is the cytoskeleton. Its function is as follows. Functions as a component of the Arp2/3 complex which is involved in regulation of actin polymerization and together with an activating nucleation-promoting factor (NPF) mediates the formation of branched actin networks. In Entamoeba histolytica (strain ATCC 30459 / HM-1:IMSS / ABRM), this protein is Actin-related protein 2/3 complex subunit 3.